A 143-amino-acid polypeptide reads, in one-letter code: Regulator of ribonuclease activity B (143 aa).

The disordered stretch occupies residues 113–143 (EDPNAEEDEYGDDGEFFDDEDEADFNNAKVH). Residues 115–136 (PNAEEDEYGDDGEFFDDEDEAD) are compositionally biased toward acidic residues.

Belongs to the RraB family. As to quaternary structure, interacts with the C-terminal region of Rne.

Its subcellular location is the cytoplasm. Its function is as follows. Globally modulates RNA abundance by binding to RNase E (Rne) and regulating its endonucleolytic activity. Can modulate Rne action in a substrate-dependent manner by altering the composition of the degradosome. This Haemophilus ducreyi (strain 35000HP / ATCC 700724) protein is Regulator of ribonuclease activity B.